Here is a 314-residue protein sequence, read N- to C-terminus: tRNA dimethylallyltransferase (314 aa).

12-19 is an ATP binding site; the sequence is GPTASGKT. A substrate-binding site is contributed by 14–19; that stretch reads TASGKT. 4 interaction with substrate tRNA regions span residues 37–40, 161–165, 242–247, and 275–282; these read DSAL, QRINR, RCVGYR, and KRQITWLR.

The protein belongs to the IPP transferase family. In terms of assembly, monomer. Mg(2+) serves as cofactor.

It catalyses the reaction adenosine(37) in tRNA + dimethylallyl diphosphate = N(6)-dimethylallyladenosine(37) in tRNA + diphosphate. Its function is as follows. Catalyzes the transfer of a dimethylallyl group onto the adenine at position 37 in tRNAs that read codons beginning with uridine, leading to the formation of N6-(dimethylallyl)adenosine (i(6)A). In Mannheimia succiniciproducens (strain KCTC 0769BP / MBEL55E), this protein is tRNA dimethylallyltransferase.